A 299-amino-acid polypeptide reads, in one-letter code: Protease HtpX homolog (299 aa).

A run of 2 helical transmembrane segments spans residues 14 to 34 (WLLL…VGYL) and 39 to 59 (GFGG…TMIF). A Zn(2+)-binding site is contributed by His143. Glu144 is a catalytic residue. His147 contacts Zn(2+). The next 2 membrane-spanning stretches (helical) occupy residues 153-173 (IRIS…AVMA) and 198-218 (IILL…ATLV). Glu227 serves as a coordination point for Zn(2+).

It belongs to the peptidase M48B family. It depends on Zn(2+) as a cofactor.

The protein resides in the cell membrane. This Streptococcus thermophilus (strain CNRZ 1066) protein is Protease HtpX homolog.